Consider the following 143-residue polypeptide: Cofilin (143 aa).

The residue at position 4 (S4) is a Phosphoserine. Residues 5–137 form the ADF-H domain; sequence GVAVADESLT…SYDSVLERVS (133 aa).

Belongs to the actin-binding proteins ADF family. Interacts with actin and AIP1 in a ternary complex. Post-translationally, the N-terminus is blocked.

The protein localises to the cytoplasm. The protein resides in the cytoskeleton. It localises to the nucleus matrix. Controls reversibly actin polymerization and depolymerization in a pH-sensitive manner. It has the ability to bind G- and F-actin in a 1:1 ratio of cofilin to actin. Binding to F-actin is regulated by tropomyosin. It is the major component of intranuclear and cytoplasmic actin rods. Required for accumulation of actin at the cell division site via depolymerizing actin at the cell ends. In association with myosin II has a role in the assembly of the contractile ring via severing actin filaments. Involved in the maintenance of the contractile ring once formed. In association with profilin and capping protein, has a role in the mitotic reorganization of the actin cytoskeleton. In effect, yeast cofilin increases the rate of actin polymerization by making new ends available for actin subunit addition. Such a protein complex is important for the polarized growth of yeast cells. The sequence is that of Cofilin (COF1) from Saccharomyces cerevisiae (strain ATCC 204508 / S288c) (Baker's yeast).